The following is a 468-amino-acid chain: Cysteine--tRNA ligase (468 aa).

A Zn(2+)-binding site is contributed by Cys29. The short motif at 31 to 41 (PTVYNYIHIGN) is the 'HIGH' region element. Zn(2+) contacts are provided by Cys209, His234, and Glu238. A 'KMSKS' region motif is present at residues 266-270 (KMSKS). Residue Lys269 coordinates ATP.

It belongs to the class-I aminoacyl-tRNA synthetase family. In terms of assembly, monomer. Requires Zn(2+) as cofactor.

It is found in the cytoplasm. It catalyses the reaction tRNA(Cys) + L-cysteine + ATP = L-cysteinyl-tRNA(Cys) + AMP + diphosphate. This is Cysteine--tRNA ligase from Brevibacillus brevis (strain 47 / JCM 6285 / NBRC 100599).